The sequence spans 352 residues: UPF0252 protein MJ1282 (352 aa).

Belongs to the UPF0252 family.

This Methanocaldococcus jannaschii (strain ATCC 43067 / DSM 2661 / JAL-1 / JCM 10045 / NBRC 100440) (Methanococcus jannaschii) protein is UPF0252 protein MJ1282.